The following is a 422-amino-acid chain: UDP-N-acetylglucosamine 1-carboxyvinyltransferase (422 aa).

Phosphoenolpyruvate is bound at residue 22-23 (KN). Arg-92 is a UDP-N-acetyl-alpha-D-glucosamine binding site. Cys-116 acts as the Proton donor in catalysis. The residue at position 116 (Cys-116) is a 2-(S-cysteinyl)pyruvic acid O-phosphothioketal. UDP-N-acetyl-alpha-D-glucosamine contacts are provided by residues 121–125 (RPVDL), Asp-307, and Leu-329.

It belongs to the EPSP synthase family. MurA subfamily.

Its subcellular location is the cytoplasm. The catalysed reaction is phosphoenolpyruvate + UDP-N-acetyl-alpha-D-glucosamine = UDP-N-acetyl-3-O-(1-carboxyvinyl)-alpha-D-glucosamine + phosphate. Its pathway is cell wall biogenesis; peptidoglycan biosynthesis. Cell wall formation. Adds enolpyruvyl to UDP-N-acetylglucosamine. This chain is UDP-N-acetylglucosamine 1-carboxyvinyltransferase, found in Aliarcobacter butzleri (strain RM4018) (Arcobacter butzleri).